A 495-amino-acid chain; its full sequence is Nuclear receptor subfamily 6 group A member 1 (495 aa).

The disordered stretch occupies residues 1–34 (MERDERPPSGGGGGGGSAGFLEPPAALPPPPRNG). Gly residues predominate over residues 9-18 (SGGGGGGGSA). A DNA-binding region (nuclear receptor) is located at residues 72–147 (QRTCLICGDR…MGMNRKAIRE (76 aa)). Zn(2+) is bound by residues Cys75, Cys78, Cys92, Cys95, Cys111, Cys117, Cys127, and Cys130. 2 consecutive NR C4-type zinc fingers follow at residues 75–95 (CLIC…CEGC) and 111–135 (CSRD…LLKC). Disordered regions lie at residues 145-165 (IRED…QISE) and 177-214 (FEEE…LSSS). Positions 180-192 (EANHWSNHGDSDH) are enriched in basic and acidic residues. The segment at 187-268 (HGDSDHSSPG…RSLDPQSYSL (82 aa)) is sufficient for interaction with UIMC1. Residues 202–214 (SNQPSPGSTLSSS) are compositionally biased toward low complexity. Positions 264-495 (QSYSLIHQLM…HSCKTSTVKE (232 aa)) constitute an NR LBD domain.

The protein belongs to the nuclear hormone receptor family. NR6 subfamily. As to quaternary structure, homodimer. Interacts with UIMC1. As to expression, expressed in the germ cells of both the adult testis and ovary, being most abundant in spermatids.

The protein resides in the nucleus. Orphan nuclear receptor that binds to a response element containing the sequence 5'-TCAAGGTCA-3'. Acts as a regulator of embryonic stem cell pluripotency by mediating repression of POU5F1/OCT4: binds to the DR0 element within the POU5F1/OCT4 promoter and inhibits POU5F1/OCT4 expression during embryonic stem cell differentiation. Required to restrict POU5F1/OCT4 expression to the germ cell lineage. Involved in the regulation of gene expression in germ cell development during gametogenesis. The polypeptide is Nuclear receptor subfamily 6 group A member 1 (Nr6a1) (Mus musculus (Mouse)).